Here is a 130-residue protein sequence, read N- to C-terminus: Tripartite terminase subunit 2 (130 aa).

The protein belongs to the herpesviridae TRM2 protein family. In terms of assembly, associates with TRM1 and TRM3 to form the tripartite terminase complex.

Its subcellular location is the host nucleus. Functionally, component of the molecular motor that translocates viral genomic DNA in empty capsid during DNA packaging. Forms a tripartite terminase complex together with TRM1 and TRM3 in the host cytoplasm. Once the complex reaches the host nucleus, it interacts with the capsid portal vertex. This portal forms a ring in which genomic DNA is translocated into the capsid. The chain is Tripartite terminase subunit 2 from Homo sapiens (Human).